Reading from the N-terminus, the 250-residue chain is 6-phosphogluconate dehydrogenase, decarboxylating (250 aa).

Substrate is bound by residues lysine 29 and arginine 56. Lysine 77 is modified (N6-acetyllysine). Substrate contacts are provided by arginine 214 and histidine 220. An NADP(+)-binding site is contributed by 245-248 (SSSY).

The protein belongs to the 6-phosphogluconate dehydrogenase family. In terms of assembly, homodimer.

Its subcellular location is the cytoplasm. The catalysed reaction is 6-phospho-D-gluconate + NADP(+) = D-ribulose 5-phosphate + CO2 + NADPH. It participates in carbohydrate degradation; pentose phosphate pathway; D-ribulose 5-phosphate from D-glucose 6-phosphate (oxidative stage): step 3/3. In terms of biological role, catalyzes the oxidative decarboxylation of 6-phosphogluconate to ribulose 5-phosphate and CO(2), with concomitant reduction of NADP to NADPH. The protein is 6-phosphogluconate dehydrogenase, decarboxylating (PGD) of Sus scrofa (Pig).